We begin with the raw amino-acid sequence, 101 residues long: Small ribosomal subunit protein bS18c (101 aa).

The segment covering 1-19 (MDKSKQLFRKSKGSFRRRL) has biased composition (basic residues). Residues 1–23 (MDKSKQLFRKSKGSFRRRLPPIG) are disordered.

It belongs to the bacterial ribosomal protein bS18 family. In terms of assembly, part of the 30S ribosomal subunit.

The protein localises to the plastid. It localises to the chloroplast. This chain is Small ribosomal subunit protein bS18c, found in Acorus gramineus (Dwarf sweet flag).